The chain runs to 275 residues: Light-independent protochlorophyllide reductase iron-sulfur ATP-binding protein (275 aa).

ATP is bound by residues 10 to 15 (GIGKST) and Lys-39. Ser-14 contributes to the Mg(2+) binding site. Residues Cys-95 and Cys-129 each coordinate [4Fe-4S] cluster. ATP is bound at residue 180–181 (NR).

The protein belongs to the NifH/BchL/ChlL family. As to quaternary structure, homodimer. Protochlorophyllide reductase is composed of three subunits; ChlL, ChlN and ChlB. [4Fe-4S] cluster is required as a cofactor.

It carries out the reaction chlorophyllide a + oxidized 2[4Fe-4S]-[ferredoxin] + 2 ADP + 2 phosphate = protochlorophyllide a + reduced 2[4Fe-4S]-[ferredoxin] + 2 ATP + 2 H2O. It participates in porphyrin-containing compound metabolism; chlorophyll biosynthesis (light-independent). Component of the dark-operative protochlorophyllide reductase (DPOR) that uses Mg-ATP and reduced ferredoxin to reduce ring D of protochlorophyllide (Pchlide) to form chlorophyllide a (Chlide). This reaction is light-independent. The L component serves as a unique electron donor to the NB-component of the complex, and binds Mg-ATP. The protein is Light-independent protochlorophyllide reductase iron-sulfur ATP-binding protein of Gloeobacter violaceus (strain ATCC 29082 / PCC 7421).